A 190-amino-acid polypeptide reads, in one-letter code: MSSVLRPALSLIVLMSLITGVAYPLVVTGVAQVAFPAQANGSLLYDEAGKVRGSALIAQSFTGDEWFQSRPSAGAFATVASGASNFAPSNPALATRVTEDAAKLANAAQGPVPLALLTTSGSGLDPHLSPEAIAWQAGRVAAARQLPLDKLQALIDASTQRPLIGPPVVNVLTLNMSLNQLPSAPRNAQL.

The helical transmembrane segment at 11–31 threads the bilayer; sequence LIVLMSLITGVAYPLVVTGVA.

Belongs to the KdpC family. As to quaternary structure, the system is composed of three essential subunits: KdpA, KdpB and KdpC.

Its subcellular location is the cell inner membrane. Part of the high-affinity ATP-driven potassium transport (or Kdp) system, which catalyzes the hydrolysis of ATP coupled with the electrogenic transport of potassium into the cytoplasm. This subunit acts as a catalytic chaperone that increases the ATP-binding affinity of the ATP-hydrolyzing subunit KdpB by the formation of a transient KdpB/KdpC/ATP ternary complex. The protein is Potassium-transporting ATPase KdpC subunit of Pseudomonas syringae pv. tomato (strain ATCC BAA-871 / DC3000).